Reading from the N-terminus, the 178-residue chain is Large ribosomal subunit protein uL6 (178 aa).

It belongs to the universal ribosomal protein uL6 family. In terms of assembly, part of the 50S ribosomal subunit. Interacts weakly with protein L13.

Functionally, this protein binds to the 23S rRNA, and is important in its secondary structure. It is located near the subunit interface in the base of the L7/L12 stalk, and near the tRNA binding site of the peptidyltransferase center. This Haloarcula marismortui (strain ATCC 43049 / DSM 3752 / JCM 8966 / VKM B-1809) (Halobacterium marismortui) protein is Large ribosomal subunit protein uL6.